A 308-amino-acid polypeptide reads, in one-letter code: ABC transporter protein AbcA (308 aa).

In terms of domain architecture, ABC transporter spans 6–245 (LAVSGVNKSF…YHKLLHMEGD (240 aa)). 58 to 65 (GHNGAGKS) is an ATP binding site.

The protein belongs to the ABC transporter superfamily.

Functionally, influences the expression of the surface array protein gene (vapA). May have both regulatory and transport activities. This is ABC transporter protein AbcA (abcA) from Aeromonas salmonicida.